Reading from the N-terminus, the 81-residue chain is Albumin-1 (81 aa).

The propeptide occupies leucine 27–isoleucine 34.

Post-translationally, three disulfide bonds are probably present. The C-terminal glycine may be removed from A1b.

Its function is as follows. A1b binds to basic 7S globulin (BG) and stimulates its phosphorylation activity. This chain is Albumin-1 (LEG1), found in Lupinus angustifolius (Narrow-leaved blue lupine).